Consider the following 677-residue polypeptide: Envelope glycoprotein (677 aa).

The N-terminal stretch at 1-33 (MGSGYQLLQLPRERFRKTSFLVWVIILFQRAIS) is a signal peptide. Residues 34–651 (MPLGIVTNST…DLNLWTGWRQ (618 aa)) lie on the Extracellular side of the membrane. Asparagine 41 carries N-linked (GlcNAc...) asparagine; by host glycosylation. 5 cysteine pairs are disulfide-bonded: cysteine 54/cysteine 610, cysteine 109/cysteine 136, cysteine 122/cysteine 148, cysteine 512/cysteine 557, and cysteine 602/cysteine 609. The receptor-binding stretch occupies residues 55–202 (RDKLSSTSQL…HFWKATPAHE (148 aa)). 12 N-linked (GlcNAc...) asparagine; by host glycosylation sites follow: asparagine 205, asparagine 239, asparagine 258, asparagine 269, asparagine 297, asparagine 317, asparagine 318, asparagine 339, asparagine 406, asparagine 420, asparagine 435, and asparagine 463. Positions 306–486 (NLHFQILSTH…PSQPGLTINT (181 aa)) are mucin-like region. Residues 315–326 (HTNNSSDQSPAG) show a composition bias toward polar residues. 3 disordered regions span residues 315–349 (HTNN…TDSP), 370–483 (NGET…PGLT), and 489–508 (KVAD…RQNT). Polar residues-rich tracts occupy residues 370–421 (NGET…ASNE), 428–445 (MNSI…QTKA), and 458–472 (PQET…TSPG). The fusion peptide stretch occupies residues 525–540 (GAAAGLAWIPYFGPAA). A coiled-coil region spans residues 555–596 (LICGLRQLANETTQALQLFLRATTELRTYSLLNRKAIDFLLQ). The N-linked (GlcNAc...) asparagine; by host glycan is linked to asparagine 564. Residues 616–635 (WTKNITDEINQIKHDFIDNP) are a coiled coil. The N-linked (GlcNAc...) asparagine; by host glycan is linked to asparagine 619. The chain crosses the membrane as a helical span at residues 652–672 (WIPAGIGIIGVIIAIIALLCI). S-palmitoyl cysteine; by host attachment occurs at residues cysteine 671 and cysteine 673. Residues 673–677 (CKILC) are Cytoplasmic-facing.

This sequence belongs to the filoviruses glycoprotein family. As to quaternary structure, homotrimer; each monomer consists of a GP1 and a GP2 subunit linked by disulfide bonds. The resulting peplomers (GP1,2) protrude from the virus surface as spikes. Interacts with host integrin alpha-V/ITGAV. Interacts with host CLEC10A. Binds also to host CD209 and CLEC4M/DC-SIGN(R). Interacts with host FOLR1. Interacts with BST2; this interaction inhibits the antiviral effect of BST2 and this allows viral release from infected cells. Interacts with host FCN1; this interaction enhances viral entry. Interacts with host TLR4; this interaction induces cell death in T-lymphocytes or proinflammatory cytokines and SOCS1 production in monocytes. Interacts with host entry receptor NPC1. In terms of assembly, GP1 and GP2delta are part of GP1,2delta soluble complexes released by ectodomain shedding. Post-translationally, the signal peptide region modulates GP's high mannose glycosylation, thereby determining the efficiency of the interactions with DC-SIGN(R). N-glycosylated. In terms of processing, O-glycosylated in the mucin-like region. Post-translationally, palmitoylation of GP2 is not required for its function. Specific enzymatic cleavages in vivo yield mature proteins. The precursor is processed into GP1 and GP2 by host cell furin in the trans Golgi, and maybe by other host proteases, to yield the mature GP1 and GP2 proteins. The cleavage site corresponds to the furin optimal cleavage sequence [KR]-X-[KR]-R. This cleavage does not seem to be required for function. After the internalization of the virus into cell endosomes, GP1 C-terminus is removed by the endosomal proteases cathepsin B, cathepsin L, or both, leaving a 19-kDa N-terminal fragment which is further digested by cathepsin B. Proteolytic processing of GP1,2 by host ADAM17 can remove the transmembrane anchor of GP2 and leads to shedding of complexes consisting in GP1 and truncated GP2 (GP1,2delta).

Its subcellular location is the virion membrane. It is found in the host cell membrane. The protein localises to the secreted. Its function is as follows. Trimeric GP1,2 complexes form the virion surface spikes and mediate the viral entry processes, with GP1 acting as the receptor-binding subunit and GP2 as the membrane fusion subunit. At later times of infection, down-regulates the expression of various host cell surface molecules that are essential for immune surveillance and cell adhesion. Down-modulates several integrins including ITGA1, ITGA2, ITGA3, ITGA4, ITGA5, ITGA6, ITGAV and ITGB1. This decrease in cell adhesion molecules may lead to cell detachment, contributing to the disruption of blood vessel integrity and hemorrhages developed during infection (cytotoxicity). Interacts with host TLR4 and thereby stimulates the differentiation and activation of monocytes leading to bystander death of T-lymphocytes. Down-regulates as well the function of host natural killer cells. Counteracts the antiviral effect of host BST2/tetherin that restricts release of progeny virions from infected cells. However, cooperates with VP40 and host BST2 to activate canonical NF-kappa-B pathway in a manner dependent on neddylation. Functions as a decoy for anti-GP1,2 antibodies thereby contributing to viral immune evasion. Interacts and activates host macrophages and dendritic cells inducing up-regulation of cytokine transcription. This effect is mediated throught activation of host TLR4. Functionally, responsible for binding to the receptor(s) on target cells. Interacts with CD209/DC-SIGN and CLEC4M/DC-SIGNR which act as cofactors for virus entry into dendritic cells (DCs) and endothelial cells. Binding to the macrophage specific lectin CLEC10A also seems to enhance virus infectivity. Interaction with FOLR1/folate receptor alpha may be a cofactor for virus entry in some cell types, although results are contradictory. Members of the Tyro3 receptor tyrosine kinase family also seem to be cell entry factors in filovirus infection. Once attached, the virions are internalized through clathrin-dependent endocytosis and/or macropinocytosis. After internalization of the virus into the endosomes of the host cell, proteolysis of GP1 by two cysteine proteases, CTSB/cathepsin B and CTSL/cathepsin L removes the glycan cap and allows GP1 binding to the host entry receptor NPC1. NPC1-binding, Ca(2+) and acidic pH induce a conformational change of GP2, which unmasks its fusion peptide and permit membranes fusion. In terms of biological role, acts as a class I viral fusion protein. Under the current model, the protein has at least 3 conformational states: pre-fusion native state, pre-hairpin intermediate state, and post-fusion hairpin state. During viral and target cell membrane fusion, the coiled coil regions (heptad repeats) assume a trimer-of-hairpins structure, positioning the fusion peptide in close proximity to the C-terminal region of the ectodomain. The formation of this structure appears to drive apposition and subsequent fusion of viral and target cell membranes. Responsible for penetration of the virus into the cell cytoplasm by mediating the fusion of the membrane of the endocytosed virus particle with the endosomal membrane. Low pH in endosomes induces an irreversible conformational change in GP2, releasing the fusion hydrophobic peptide. This Reston ebolavirus (strain Philippines-96) (REBOV) protein is Envelope glycoprotein (GP).